A 433-amino-acid polypeptide reads, in one-letter code: 26S proteasome regulatory subunit 7 (433 aa).

The segment at 1–22 is disordered; that stretch reads MPDYLGADQRKTKEDEKDDKPI. Residues 8 to 22 are compositionally biased toward basic and acidic residues; it reads DQRKTKEDEKDDKPI. Residue lysine 116 is modified to N6-acetyllysine. Position 216–223 (216–223) interacts with ATP; it reads GPPGTGKT. An N6-acetyllysine modification is found at lysine 422.

The protein belongs to the AAA ATPase family. In terms of assembly, component of the 19S proteasome regulatory particle complex. The 26S proteasome consists of a 20S core particle (CP) and two 19S regulatory subunits (RP). The regulatory particle is made of a lid composed of 9 subunits, a base containing 6 ATPases including PSMC2 and few additional components. Interacts with NDC80 and SQSTM1. Interacts with PAAF1. Interacts with TRIM5. Monoubiquitinated by RNF181. Post-translationally, phosphorylated. Dephosphorylated by UBLCP1 which impairs PSMC2 ATPase activity and disrupts 26S proteasome assembly.

Its subcellular location is the cytoplasm. In terms of biological role, component of the 26S proteasome, a multiprotein complex involved in the ATP-dependent degradation of ubiquitinated proteins. This complex plays a key role in the maintenance of protein homeostasis by removing misfolded or damaged proteins, which could impair cellular functions, and by removing proteins whose functions are no longer required. Therefore, the proteasome participates in numerous cellular processes, including cell cycle progression, apoptosis, or DNA damage repair. PSMC2 belongs to the heterohexameric ring of AAA (ATPases associated with diverse cellular activities) proteins that unfolds ubiquitinated target proteins that are concurrently translocated into a proteolytic chamber and degraded into peptides. The chain is 26S proteasome regulatory subunit 7 (Psmc2) from Rattus norvegicus (Rat).